The sequence spans 64 residues: Endodeoxyribonuclease toxin RalR (64 aa).

It depends on Ca(2+) as a cofactor. Mg(2+) is required as a cofactor.

Its activity is regulated as follows. Inhibited by EDTA. Its function is as follows. Toxic component of a type I toxin-antitoxin (TA) system. Upon overexpression inhibits growth and reduces colony-forming units in both the presence and absence of the Rac prophage, cells become filamentous. Has deoxyribonuclease activity (probably endonucleolytic), does not digest RNA. Its toxic effects are neutralized by sRNA antitoxin RalA, which is encoded in trans on the opposite DNA strand. Has RAL-like activity. The protein is Endodeoxyribonuclease toxin RalR (ralR) of Escherichia coli (strain K12).